We begin with the raw amino-acid sequence, 307 residues long: Estrogen receptor (307 aa).

The nuclear receptor DNA-binding region spans 1-43 (GHNDYMCPATNQCTIDKNRRKSCQACRLRKCYEVGMMKGGIRK). The NR C4-type zinc-finger motif lies at 7–31 (CPATNQCTIDKNRRKSCQACRLRKC). Positions 44–95 (DRRGGRILKHKRQREEHDNRNAGAIVERRSPNLWPSPLMITHNKKNSPALSL) are hinge. The 212-residue stretch at 96–307 (TADQIVSALL…HFRHMSNKGM (212 aa)) folds into the NR LBD domain.

Belongs to the nuclear hormone receptor family. NR3 subfamily. As to quaternary structure, binds DNA as a homodimer. Can form a heterodimer with ER-beta.

Its subcellular location is the nucleus. The steroid hormones and their receptors are involved in the regulation of eukaryotic gene expression and affect cellular proliferation and differentiation in target tissues. This Aspidoscelis uniparens (Desert grassland whiptail lizard) protein is Estrogen receptor (ESR1).